The sequence spans 732 residues: MSRRKISSESFSSLGSDYLETSPEEEGECPLSRLCWNGSRSPPGPLEPSPAAAAAAAAPAPTPAASAAAAAATAGARRVQRRRRVNLDSLGESISRLTAPSPQTIQQTLKRTLQYYEHQVIGYRDAEKNFHNISNRCSYADHSNKEEIEDVSGILQCTANILGLKFEEIQKRFGEEFFNICFHENERVLRAVGGTLQDFFNGFDALLEHIRTSFGKQATLESPSFLCKELPEGTLMLHYFHPHHIVGFAMLGMIKAAGKKIYRLDVEVEQVANEKLCSDVSNPGNCSCLTFLIKECENTNIMKNLPQGTSQVPADLRISINTFCRAFPFHLMFDPSMSVLQLGEGLRKQLRCDTHKVLKFEDCFEIVSPKVNATFERVLLRLSTPFVIRTKPEASGSENKDKVMEVKGQMIHVPESNSILFLGSPCVDKLDELMGRGLHLSDIPIHDATRDVILVGEQAKAQDGLKKRMDKLKATLERTHQALEEEKKKTVDLLYSIFPGDVAQQLWQGQQVQARKFDDVTMLFSDIVGFTAICAQCTPMQVISMLNELYTRFDHQCGFLDIYKVETIGDAYCVAAGLHRKSLCHAKPIALMALKMMELSEEVLTPDGRPIQMRIGIHSGSVLAGVVGVRMPRYCLFGNNVTLASKFESGSHPRRINVSPTTYQLLKREESFTFIPRSREELPDNFPKEIPGICYFLEVRTGPKPPKPSLSSSRIKKVSYNIGTMFLRETSL.

The disordered stretch occupies residues 1 to 58 (MSRRKISSESFSSLGSDYLETSPEEEGECPLSRLCWNGSRSPPGPLEPSPAAAAAAAA). Low complexity predominate over residues 49 to 58 (SPAAAAAAAA). Residues 521–648 (TMLFSDIVGF…NNVTLASKFE (128 aa)) enclose the Guanylate cyclase domain.

It belongs to the adenylyl cyclase class-4/guanylyl cyclase family. Heterodimer of an alpha and a beta chain. In terms of tissue distribution, isoform 1 is expressed in fetal brain, liver, colon, endothelium and testis. Isoform 2 is expressed only in liver, colon and endothelium.

The protein resides in the cytoplasm. It catalyses the reaction GTP = 3',5'-cyclic GMP + diphosphate. Its activity is regulated as follows. Activated by nitric oxide in the presence of magnesium or manganese ions. Functionally, has guanylyl cyclase on binding to the beta-1 subunit. Its function is as follows. Isoform 2 acts as a negative regulator of guanylyl cyclase activity as it forms non-functional heterodimers with the beta subunits. The chain is Guanylate cyclase soluble subunit alpha-2 (GUCY1A2) from Homo sapiens (Human).